The primary structure comprises 101 residues: Small ribosomal subunit protein uS14 (101 aa).

Belongs to the universal ribosomal protein uS14 family. In terms of assembly, part of the 30S ribosomal subunit. Contacts proteins S3 and S10.

In terms of biological role, binds 16S rRNA, required for the assembly of 30S particles and may also be responsible for determining the conformation of the 16S rRNA at the A site. The protein is Small ribosomal subunit protein uS14 of Bordetella petrii (strain ATCC BAA-461 / DSM 12804 / CCUG 43448).